A 304-amino-acid polypeptide reads, in one-letter code: tRNA dimethylallyltransferase (304 aa).

ATP is bound at residue 2-9 (GPTASGKT). 4–9 (TASGKT) provides a ligand contact to substrate. Interaction with substrate tRNA regions lie at residues 27 to 30 (DSAL), 151 to 155 (QRINR), 232 to 237 (RCVGYR), and 265 to 272 (KRQITWLR).

It belongs to the IPP transferase family. In terms of assembly, monomer. Requires Mg(2+) as cofactor.

The enzyme catalyses adenosine(37) in tRNA + dimethylallyl diphosphate = N(6)-dimethylallyladenosine(37) in tRNA + diphosphate. Its function is as follows. Catalyzes the transfer of a dimethylallyl group onto the adenine at position 37 in tRNAs that read codons beginning with uridine, leading to the formation of N6-(dimethylallyl)adenosine (i(6)A). The polypeptide is tRNA dimethylallyltransferase (Actinobacillus pleuropneumoniae serotype 5b (strain L20)).